The primary structure comprises 393 residues: Bifunctional enzyme Fae/Hps (393 aa).

Residues 1–161 form a formaldehyde-activating enzyme region; it reads MYLIGEALVG…HEKDRAAHAV (161 aa). H17 (proton donor) is an active-site residue. The substrate site is built by D19, L48, K66, T68, and Q83. Residues 162-393 are 3-hexulose-6-phosphate synthase; the sequence is MGFKVQRLWD…IDQFRIMTDF (232 aa).

This sequence in the N-terminal section; belongs to the formaldehyde-activating enzyme family. It in the C-terminal section; belongs to the HPS/KGPDC family. HPS subfamily.

The catalysed reaction is 5,6,7,8-tetrahydromethanopterin + formaldehyde = 5,10-methylenetetrahydromethanopterin + H2O. The enzyme catalyses D-ribulose 5-phosphate + formaldehyde = D-arabino-hex-3-ulose 6-phosphate. Its pathway is carbohydrate biosynthesis; D-ribose 5-phosphate biosynthesis. Functionally, catalyzes the condensation of formaldehyde with tetrahydromethanopterin (H(4)MPT) to 5,10-methylenetetrahydromethanopterin. In terms of biological role, catalyzes the reversible formation of ribulose-5-phosphate and formaldehyde from 3-hexulose-6-phosphate. The chain is Bifunctional enzyme Fae/Hps from Methanoculleus marisnigri (strain ATCC 35101 / DSM 1498 / JR1).